Here is a 496-residue protein sequence, read N- to C-terminus: Protein disulfide-isomerase (496 aa).

The N-terminal stretch at 1 to 18 (MKFLICALFLAASYVAAS) is a signal peptide. 2 Thioredoxin domains span residues 19–134 (AEAE…KKTG) and 349–474 (GKLK…ANGE). Residues cysteine 56, cysteine 59, cysteine 397, and cysteine 400 each act as nucleophile in the active site. Disulfide bonds link cysteine 56/cysteine 59 and cysteine 397/cysteine 400. The disordered stretch occupies residues 473 to 496 (GEVADSEPVEETEEEEEAPKKDEL). The segment covering 476–489 (ADSEPVEETEEEEE) has biased composition (acidic residues). The Prevents secretion from ER signature appears at 493-496 (KDEL).

This sequence belongs to the protein disulfide isomerase family. As to quaternary structure, homodimer. As to expression, expressed in all head and body tissues.

It is found in the endoplasmic reticulum lumen. The catalysed reaction is Catalyzes the rearrangement of -S-S- bonds in proteins.. Participates in the folding of proteins containing disulfide bonds. This chain is Protein disulfide-isomerase (Pdi), found in Drosophila melanogaster (Fruit fly).